The sequence spans 78 residues: MRFLHFLIVAVLLASFMESGAMPRNPKKKRGWDTPAPCRYCQWNGPQCCVYYCSSCNYEEAREEGHYVSSHLLERQGR.

The signal sequence occupies residues 1–21 (MRFLHFLIVAVLLASFMESGA). A propeptide spanning residues 22–26 (MPRNP) is cleaved from the precursor. Disulfide bonds link cysteine 38/cysteine 49, cysteine 41/cysteine 53, and cysteine 48/cysteine 56. Residue glutamine 76 is modified to Glutamine amide.

In terms of tissue distribution, expressed by the venom duct.

Its subcellular location is the secreted. Probable neurotoxin with unknown target. Possibly targets ion channels. This chain is Conotoxin Cal6.3a, found in Californiconus californicus (California cone).